Consider the following 367-residue polypeptide: MPRPILATIHSAALRHNLERVRQAVPDAKLWAVVKANAYGHGIENVFEALRGADGFAMLDLAEAERVRQLGWRGPILLLEGVFEPRDLELCSRLSIWHAVHCDAQIDWLAAHKTQNGHRVFLKMNSGMNRLGFTPERYRAAWARLNALPQVEEISFMTHFSDADAGAGQPGISAQLQRFHDATRDLPGERSVGNSAATLRQGDDALVRCDWVRPGIVLYGSSPDYPQHTAAHWDLQPTQTLSSRIIGVQQLTEGQSVGYGSRFTAEGPLRLGTVACGYADGYPRHCGTGTPVLVNGVRTRTLGCVSMDMLAVDLTPVPDAGMGSEVTLWGRASNGAVLPIDEVAEAAGTLGYELMCAVAPRVNKTID.

Lys-35 (proton acceptor; specific for D-alanine) is an active-site residue. Lys-35 bears the N6-(pyridoxal phosphate)lysine mark. Arg-130 serves as a coordination point for substrate. Tyr-259 functions as the Proton acceptor; specific for L-alanine in the catalytic mechanism. Met-307 is a binding site for substrate.

The protein belongs to the alanine racemase family. Pyridoxal 5'-phosphate is required as a cofactor.

It catalyses the reaction L-alanine = D-alanine. It participates in amino-acid biosynthesis; D-alanine biosynthesis; D-alanine from L-alanine: step 1/1. Functionally, catalyzes the interconversion of L-alanine and D-alanine. May also act on other amino acids. The chain is Alanine racemase (alr) from Delftia acidovorans (strain DSM 14801 / SPH-1).